A 31-amino-acid chain; its full sequence is Cyclotide vico-A (31 aa).

The segment at residues 1 to 31 is a cross-link (cyclopeptide (Gly-Asn)); the sequence is GSIPCAESCVYIPCFTGIAGCSCKNKVCYYN. 3 disulfide bridges follow: C5-C21, C9-C23, and C14-C28.

This sequence belongs to the cyclotide family. Bracelet subfamily. In terms of processing, this is a cyclic peptide.

Its function is as follows. Probably participates in a plant defense mechanism. This chain is Cyclotide vico-A, found in Viola cotyledon (Violeta).